The sequence spans 341 residues: GTP-binding protein GTR2 (341 aa).

GTP-binding residues include Ser23, Ser24, Ser43, His124, and Asp127.

It belongs to the GTR/RAG GTP-binding protein family. Heterodimer; with GTR1. Component of the GSE complex composed of GTR1, GTR2, SLM4, MEH1 and LTV1. Component of the EGO complex, at least composed of GTR2, SLM4 and MEH1. Interacts with GTR1; the interaction is direct.

The protein localises to the vacuole membrane. It carries out the reaction GTP + H2O = GDP + phosphate + H(+). Its function is as follows. GTPase involved in activation of the TORC1 signaling pathway, which promotes growth and represses autophagy in nutrient-rich conditions. Also required for TORC1 inactivation during nitrogen starvation. Required for intracellular sorting of GAP1 out of the endosome. Involved in the regulation of microautophagy. The chain is GTP-binding protein GTR2 from Saccharomyces cerevisiae (strain ATCC 204508 / S288c) (Baker's yeast).